We begin with the raw amino-acid sequence, 314 residues long: Protein SPOROCYTELESS (314 aa).

Polar residues predominate over residues 1-17; the sequence is MATSLFFMSTDQNSVGN. Disordered regions lie at residues 1-20 and 33-62; these read MATS…NPND and GEIR…PTLR. The SPL motif lies at 62–70; that stretch reads RGMGVAKLE. Residues 308–314 carry the EAR motif; the sequence is IDLSLKL.

Belongs to the NOZZLE family. As to quaternary structure, homodimer and heterodimer with SPEARs. Interacts in vitro with YAB1, YAB3 and YAB4. Interacts (via EAR motif) with TPL, TPR1, TPR2, TPR3 and TPR4. Interacts with SPEAR1, SPEAR2, SPEAR3, SPEAR4, TCP1, TCP6, TCP8, TCP9, TCP11, TCP15, TCP20, TCP21 and TCP23. Interacts with TCP2, TCP3, TCP4, TCP5, TCP10, TCP13, TCP17 and TCP24. In terms of tissue distribution, expressed in flower buds. Not found in leaves, siliques and stems. Detected in rosette leaves, stem tissue and seedlings.

Its subcellular location is the nucleus. Functionally, transcriptional regulator of sporocyte development. Acts as an adapter-like transcriptional repressor recruiting TPL/TPR corepressors to inhibit TCP transcription factors. Required for nucellus and embryo sac development. Plays a central role in patterning both the proximal-distal and the adaxial-abaxial axes during ovule development. Involved in establishing the prospective chalaza of the ovule and in controlling the cell number and the length of the funiculus, and is required for the development of the integuments. Required, with BEL1, for cytokinin-induced PIN1 expression in ovules. Involved in controlling stamen identity. May also regulate the morphology of lateral organs by repressing auxin production. The polypeptide is Protein SPOROCYTELESS (Arabidopsis thaliana (Mouse-ear cress)).